Consider the following 306-residue polypeptide: Ornithine carbamoyltransferase (306 aa).

Carbamoyl phosphate contacts are provided by residues 46–49 (STRT), glutamine 73, arginine 97, and 124–127 (HPTQ). Residues asparagine 156, aspartate 220, and 224–225 (SM) contribute to the L-ornithine site. Residues 260-261 (CL) and arginine 288 each bind carbamoyl phosphate.

It belongs to the aspartate/ornithine carbamoyltransferase superfamily. OTCase family.

The protein resides in the cytoplasm. It carries out the reaction carbamoyl phosphate + L-ornithine = L-citrulline + phosphate + H(+). Its pathway is amino-acid degradation; L-arginine degradation via ADI pathway; carbamoyl phosphate from L-arginine: step 2/2. Functionally, reversibly catalyzes the transfer of the carbamoyl group from carbamoyl phosphate (CP) to the N(epsilon) atom of ornithine (ORN) to produce L-citrulline. The polypeptide is Ornithine carbamoyltransferase (Campylobacter jejuni subsp. doylei (strain ATCC BAA-1458 / RM4099 / 269.97)).